A 161-amino-acid polypeptide reads, in one-letter code: Large ribosomal subunit protein uL16 (161 aa).

The segment at 140–161 (LNKGNYKPAKTPVTADDSESSS) is disordered.

The protein belongs to the universal ribosomal protein uL16 family. As to quaternary structure, part of the 50S ribosomal subunit.

Binds 23S rRNA and is also seen to make contacts with the A and possibly P site tRNAs. In Prochlorococcus marinus (strain NATL1A), this protein is Large ribosomal subunit protein uL16.